We begin with the raw amino-acid sequence, 361 residues long: Probable pectinesterase 49 (361 aa).

The signal sequence occupies residues 1 to 22; it reads MGYISLALVALLVFFASPVVLA. Asparagine 128 carries an N-linked (GlcNAc...) asparagine glycan. Glutamine 174 is a substrate binding site. Aspartate 197 serves as the catalytic Proton donor. Aspartate 218 (nucleophile) is an active-site residue. Arginine 275 and tryptophan 277 together coordinate substrate.

The protein belongs to the pectinesterase family. In terms of tissue distribution, expressed in flower buds.

It localises to the secreted. The protein localises to the cell wall. The enzyme catalyses [(1-&gt;4)-alpha-D-galacturonosyl methyl ester](n) + n H2O = [(1-&gt;4)-alpha-D-galacturonosyl](n) + n methanol + n H(+). It participates in glycan metabolism; pectin degradation; 2-dehydro-3-deoxy-D-gluconate from pectin: step 1/5. Functionally, acts in the modification of cell walls via demethylesterification of cell wall pectin. This is Probable pectinesterase 49 (PME49) from Arabidopsis thaliana (Mouse-ear cress).